The chain runs to 457 residues: D(1B) dopamine receptor (457 aa).

At 1–41 the chain is on the extracellular side; it reads MYQPFQHLDSDQVASWQSPEMLMNKSVSRESQRRKELVAGQ. An N-linked (GlcNAc...) asparagine glycan is attached at Asn-24. A helical membrane pass occupies residues 42 to 67; sequence IVTGSLLLLLIFWTLFGNILVCTAVM. The Cytoplasmic segment spans residues 68–78; that stretch reads RFRHLRSRVTN. Residues 79 to 105 form a helical membrane-spanning segment; sequence IFIVSLAVSDLLVALLVMPWKAVAEVA. Topologically, residues 106–114 are extracellular; the sequence is GHWPFGAFC. Cys-114 and Cys-199 form a disulfide bridge. A helical transmembrane segment spans residues 115–137; the sequence is DIWVAFDIMCSTASILNLCVISV. At 138-156 the chain is on the cytoplasmic side; it reads DRYWAISSPFRYERKMTQR. Residues 157 to 181 traverse the membrane as a helical segment; the sequence is VALLMISTAWALSVLISFIPVQLSW. The Extracellular portion of the chain corresponds to 182–205; sequence HKSETEDHLLSNHSTGNCDSSLNR. The chain crosses the membrane as a helical span at residues 206 to 231; the sequence is TYAISSSLISFYIPVAIMIVTYTRIY. Topologically, residues 232-282 are cytoplasmic; sequence RIAQIQIKRISTLERAAEHAQSCRSNRVDSCSRHHQTSLRTSIKKETKVLK. Residues 283–309 form a helical membrane-spanning segment; the sequence is TLSIIMGVFVCCWLPFFILNCMVPFCD. The Extracellular portion of the chain corresponds to 310 to 326; sequence RSPGHPQAGLPCVSETT. Residues 327–351 traverse the membrane as a helical segment; the sequence is FDIFVWFGWANSSLNPIIYAFNADF. The Cytoplasmic portion of the chain corresponds to 352–457; sequence RKVFSSLLGC…ITPSMSNGIH (106 aa). A lipid anchor (S-palmitoyl cysteine) is attached at Cys-361.

Belongs to the G-protein coupled receptor 1 family. Brain and kidney.

The protein resides in the cell membrane. In terms of biological role, dopamine receptor whose activity is mediated by G proteins which activate adenylyl cyclase. This Xenopus laevis (African clawed frog) protein is D(1B) dopamine receptor (drd5).